The following is a 283-amino-acid chain: MEVNKTTESLFSAKVEHNHAQAESHEPRDQRDVKVFSLGGKSSSKQEKLDHGSGRTSSRHETSRSSKEGSIEDKSAEVSSREEEEENRDGFLSGGNLTAGVAFTDTPMAVASEVMIETNAVTMSQIDLQWVEQLVLSTVESLLVADVDGKQLVEIVLDNNSTVPEAFCGANLTLVQTGEDVAVTFSNFVDQDQVAEAMQLVQQNPEQLTSLVESLKSRQLNLTELVVGNVAVSLPVLEKVETPLHMIAATIRHHDQEGDQEGEGRQEQHQGRQQEKKLEEAQI.

Polar residues predominate over residues M1 to L10. 2 disordered regions span residues M1–N96 and D255–I283. Basic and acidic residues-rich tracts occupy residues K14–K34 and S44–R81.

The protein belongs to the chlamydial CPn_0705/CT_671/TC_0042 family.

This is an uncharacterized protein from Chlamydia muridarum (strain MoPn / Nigg).